Reading from the N-terminus, the 65-residue chain is Large ribosomal subunit protein bL35 (65 aa).

The span at 1–16 (MPKMKTHRASAKRFKK) shows a compositional bias: basic residues. The interval 1 to 24 (MPKMKTHRASAKRFKKTANGGLKS) is disordered.

This sequence belongs to the bacterial ribosomal protein bL35 family.

This Leuconostoc mesenteroides subsp. mesenteroides (strain ATCC 8293 / DSM 20343 / BCRC 11652 / CCM 1803 / JCM 6124 / NCDO 523 / NBRC 100496 / NCIMB 8023 / NCTC 12954 / NRRL B-1118 / 37Y) protein is Large ribosomal subunit protein bL35.